The primary structure comprises 156 residues: Protein BUNDLE SHEATH DEFECTIVE 2, chloroplastic (156 aa).

The transit peptide at 1–41 directs the protein to the chloroplast; the sequence is MNSAALNARTASVAPQPQACHACKCRQLLSRRVPPAQRQVE. Residues Cys78, Cys81, Cys89, Cys92, Cys133, Cys136, Cys144, and Cys147 each contribute to the Zn(2+) site.

This sequence belongs to the BSD2 chaperone family. Interacts with the RuBisCo large subunit (RbcL) assembled as an intermediate complex made of eight RbcL and eight BSD2 subunits.

Its subcellular location is the plastid. It localises to the chloroplast stroma. Its function is as follows. Chloroplast chaperone required for RuBisCo biogenesis and translational regulation of the RuBisCo large subunit (RbcL). Stabilizes an end-state assembly intermediate of eight RbcL subunits until the small subunits (RBCSs) become available to produce a complete stable RuBisCo complex containing eight small and eight large subunits. This is Protein BUNDLE SHEATH DEFECTIVE 2, chloroplastic from Chlamydomonas reinhardtii (Chlamydomonas smithii).